Reading from the N-terminus, the 164-residue chain is FMN reductase (NADH) RutF (164 aa).

The protein belongs to the non-flavoprotein flavin reductase family. RutF subfamily.

The enzyme catalyses FMNH2 + NAD(+) = FMN + NADH + 2 H(+). Functionally, catalyzes the reduction of FMN to FMNH2 which is used to reduce pyrimidine by RutA via the Rut pathway. In Shigella flexneri serotype X (strain 2002017), this protein is FMN reductase (NADH) RutF.